A 493-amino-acid polypeptide reads, in one-letter code: Sodium-coupled neutral amino acid symporter 2 (493 aa).

The Cytoplasmic segment spans residues 1–72 (MNNAEVLNVA…LPGTTSFGMS (72 aa)). Positions 1–92 (MNNAEVLNVA…SGILGLSYAM (92 aa)) are regulates protein turnover upon amino acid deprivation. A helical membrane pass occupies residues 73-92 (VFNLSNAIVGSGILGLSYAM). N78 is a binding site for Na(+). The Extracellular segment spans residues 93-98 (ANTGIA). A helical membrane pass occupies residues 99–119 (LFMILLVFVTVFSLYSIHLLL). The Cytoplasmic portion of the chain corresponds to 120 to 154 (KTANEGGSLLYEQLGLKAFGIPGKLAASGSVTLQN). The helical transmembrane segment at 155–173 (IGAMSSYLYIVKYELPLVI) threads the bilayer. Topologically, residues 174–184 (KALMDIKESNG) are extracellular. Residues 185–205 (EWYLNGDYLVIMVSLAIILPL) traverse the membrane as a helical segment. Residues 206–213 (SLLRNLGY) lie on the Cytoplasmic side of the membrane. Residues 214 to 234 (LGYTSGFSPLCMVFFLIVVIY) traverse the membrane as a helical segment. The Extracellular portion of the chain corresponds to 235–279 (KKFEIPCPLEAMNMTSNSSSHDHMAHNETDDEMCKPKYFVFNSQT). C241 and C268 are joined by a disulfide. N-linked (GlcNAc...) asparagine glycosylation is found at N247, N251, and N261. Residues 280–300 (VYAVPILTFSFVCHPAVLPIY) form a helical membrane-spanning segment. The Cytoplasmic portion of the chain corresponds to 301 to 316 (QELKGRSRRRMMNVSN). The helical transmembrane segment at 317–337 (VSFFAMFIMYLLAALFGYLTF) threads the bilayer. Topologically, residues 338–358 (YSKVEPELLHTYSKVFGAGVI) are extracellular. Residues 359–379 (FVVVRLAVLMAVTLTVPIVIF) form a helical membrane-spanning segment. T373 contacts Na(+). The Cytoplasmic segment spans residues 380–400 (PIRSSLNELFCSGKDFAWIRH). The chain crosses the membrane as a helical span at residues 401–421 (ILITFLILAFTNVLVIFVPTI). Residues 422–423 (RD) are Extracellular-facing. The helical transmembrane segment at 424 to 444 (IFGFIGASAAAMLVFILPSAF) threads the bilayer. At 445 to 459 (YIRLVKKESMKSVQK) the chain is on the cytoplasmic side. A helical membrane pass occupies residues 460-482 (IGALLFLIGGIIVMIGSMTLIIL). Over 483-493 (DWIHNSTSGGN) the chain is Extracellular.

The protein belongs to the amino acid/polyamine transporter 2 family.

The protein resides in the cell membrane. It carries out the reaction L-alanine(in) + Na(+)(in) = L-alanine(out) + Na(+)(out). It catalyses the reaction glycine(in) + Na(+)(in) = glycine(out) + Na(+)(out). The catalysed reaction is L-serine(in) + Na(+)(in) = L-serine(out) + Na(+)(out). The enzyme catalyses L-proline(in) + Na(+)(in) = L-proline(out) + Na(+)(out). It carries out the reaction L-methionine(in) + Na(+)(in) = L-methionine(out) + Na(+)(out). It catalyses the reaction L-histidine(in) + Na(+)(in) = L-histidine(out) + Na(+)(out). The catalysed reaction is L-asparagine(in) + Na(+)(in) = L-asparagine(out) + Na(+)(out). The enzyme catalyses L-glutamine(in) + Na(+)(in) = L-glutamine(out) + Na(+)(out). It carries out the reaction L-threonine(in) + Na(+)(in) = L-threonine(out) + Na(+)(out). It catalyses the reaction L-leucine(in) + Na(+)(in) = L-leucine(out) + Na(+)(out). The catalysed reaction is L-phenylalanine(in) + Na(+)(in) = L-phenylalanine(out) + Na(+)(out). Its activity is regulated as follows. Inhibited by N-methyl-D-glucamine. Inhibited by choline. Allosteric regulation of sodium ions binding by pH. In terms of biological role, symporter that cotransports neutral amino acids and sodium ions from the extracellular to the intracellular side of the cell membrane. The transport is pH-sensitive, Li(+)-intolerant, electrogenic, driven by the Na(+) electrochemical gradient and cotransports of neutral amino acids and sodium ions with a stoichiometry of 1:1. The sequence is that of Sodium-coupled neutral amino acid symporter 2 from Xenopus tropicalis (Western clawed frog).